We begin with the raw amino-acid sequence, 508 residues long: Histidine--tRNA ligase, cytoplasmic (508 aa).

One can recognise a WHEP-TRS domain in the interval 3-59 (SPALEELVLNSRHRLVRGLKQQKASADQIEEEVAKLLKLKAQLGHDESKQKFVLKTP). Serine 66 carries the phosphoserine modification. Residues 130-132 (DLT), arginine 157, aspartate 177, arginine 326, and 330-331 (YY) contribute to the L-histidine site.

Belongs to the class-II aminoacyl-tRNA synthetase family. Homodimer.

The protein localises to the cytoplasm. The catalysed reaction is tRNA(His) + L-histidine + ATP = L-histidyl-tRNA(His) + AMP + diphosphate + H(+). In terms of biological role, catalyzes the ATP-dependent ligation of histidine to the 3'-end of its cognate tRNA, via the formation of an aminoacyl-adenylate intermediate (His-AMP). Plays a role in axon guidance. This is Histidine--tRNA ligase, cytoplasmic (HARS1) from Mesocricetus auratus (Golden hamster).